Reading from the N-terminus, the 547-residue chain is Chaperonin GroEL (547 aa).

ATP is bound by residues 30–33 (TLGP), Lys-51, 87–91 (DGTTT), Gly-415, 480–482 (NAA), and Asp-496.

Belongs to the chaperonin (HSP60) family. As to quaternary structure, forms a cylinder of 14 subunits composed of two heptameric rings stacked back-to-back. Interacts with the co-chaperonin GroES.

The protein resides in the cytoplasm. It catalyses the reaction ATP + H2O + a folded polypeptide = ADP + phosphate + an unfolded polypeptide.. Together with its co-chaperonin GroES, plays an essential role in assisting protein folding. The GroEL-GroES system forms a nano-cage that allows encapsulation of the non-native substrate proteins and provides a physical environment optimized to promote and accelerate protein folding. The chain is Chaperonin GroEL from Glaesserella parasuis serovar 5 (strain SH0165) (Haemophilus parasuis).